Consider the following 237-residue polypeptide: Large ribosomal subunit protein uL1 (237 aa).

It belongs to the universal ribosomal protein uL1 family. Part of the 50S ribosomal subunit.

In terms of biological role, binds directly to 23S rRNA. The L1 stalk is quite mobile in the ribosome, and is involved in E site tRNA release. Protein L1 is also a translational repressor protein, it controls the translation of the L11 operon by binding to its mRNA. The chain is Large ribosomal subunit protein uL1 from Chloroflexus aurantiacus (strain ATCC 29364 / DSM 637 / Y-400-fl).